Consider the following 262-residue polypeptide: tRNA pseudouridine synthase A (262 aa).

Residue D52 is the Nucleophile of the active site. A substrate-binding site is contributed by Y110.

This sequence belongs to the tRNA pseudouridine synthase TruA family. In terms of assembly, homodimer.

The catalysed reaction is uridine(38/39/40) in tRNA = pseudouridine(38/39/40) in tRNA. Its function is as follows. Formation of pseudouridine at positions 38, 39 and 40 in the anticodon stem and loop of transfer RNAs. This is tRNA pseudouridine synthase A from Chromobacterium violaceum (strain ATCC 12472 / DSM 30191 / JCM 1249 / CCUG 213 / NBRC 12614 / NCIMB 9131 / NCTC 9757 / MK).